Reading from the N-terminus, the 943-residue chain is Isoleucine--tRNA ligase (943 aa).

Positions 58–68 (PYANGSIHIGH) match the 'HIGH' region motif. An L-isoleucyl-5'-AMP-binding site is contributed by Glu-567. A 'KMSKS' region motif is present at residues 608–612 (KMSKS). Lys-611 contacts ATP. Cys-906, Cys-909, Cys-926, and Cys-929 together coordinate Zn(2+).

Belongs to the class-I aminoacyl-tRNA synthetase family. IleS type 1 subfamily. As to quaternary structure, monomer. Zn(2+) is required as a cofactor.

The protein localises to the cytoplasm. The catalysed reaction is tRNA(Ile) + L-isoleucine + ATP = L-isoleucyl-tRNA(Ile) + AMP + diphosphate. Functionally, catalyzes the attachment of isoleucine to tRNA(Ile). As IleRS can inadvertently accommodate and process structurally similar amino acids such as valine, to avoid such errors it has two additional distinct tRNA(Ile)-dependent editing activities. One activity is designated as 'pretransfer' editing and involves the hydrolysis of activated Val-AMP. The other activity is designated 'posttransfer' editing and involves deacylation of mischarged Val-tRNA(Ile). The sequence is that of Isoleucine--tRNA ligase from Pseudomonas aeruginosa (strain ATCC 15692 / DSM 22644 / CIP 104116 / JCM 14847 / LMG 12228 / 1C / PRS 101 / PAO1).